The sequence spans 400 residues: Probable tRNA pseudouridine synthase D (400 aa).

Aspartate 89 acts as the Nucleophile in catalysis. The 196-residue stretch at 162–357 folds into the TRUD domain; it reads GVPNYYGLQR…AGGDRKPALL (196 aa).

Belongs to the pseudouridine synthase TruD family.

It catalyses the reaction uridine(13) in tRNA = pseudouridine(13) in tRNA. Could be responsible for synthesis of pseudouridine from uracil-13 in transfer RNAs. The protein is Probable tRNA pseudouridine synthase D of Methanopyrus kandleri (strain AV19 / DSM 6324 / JCM 9639 / NBRC 100938).